We begin with the raw amino-acid sequence, 177 residues long: Large ribosomal subunit protein uL6 (177 aa).

The protein belongs to the universal ribosomal protein uL6 family. Part of the 50S ribosomal subunit.

Its function is as follows. This protein binds to the 23S rRNA, and is important in its secondary structure. It is located near the subunit interface in the base of the L7/L12 stalk, and near the tRNA binding site of the peptidyltransferase center. The sequence is that of Large ribosomal subunit protein uL6 from Nitrosospira multiformis (strain ATCC 25196 / NCIMB 11849 / C 71).